The chain runs to 497 residues: Vacuolar fusion protein CCZ1 homolog B (497 aa).

The interval 244 to 284 (GTSSWSYLRKGSGSPQISSRSTTVPPLGSGGTLPSGNGSST) is disordered.

This sequence belongs to the CCZ1 family. As to quaternary structure, interacts with MON1.

Its subcellular location is the endosome. It is found in the prevacuolar compartment. In terms of biological role, plays an important role in membrane trafficking through the secretory apparatus. In complex with MON1, acts as a guanine exchange factor (GEF) for RABG3F of the RAB7 protein family. Promotes the exchange of GDP to GTP, converting RABG3F from an inactive GDP-bound form into an active GTP-bound form. The RABG3F active form is involved in protein trafficking from prevacuolar compartments (PVCs) to vacuoles. May serve as a linker between Rab5 and Rab7 protein families in PVCs and mediate PVC maturation. In Arabidopsis thaliana (Mouse-ear cress), this protein is Vacuolar fusion protein CCZ1 homolog B.